Reading from the N-terminus, the 288-residue chain is Type II iodothyronine deiodinase (288 aa).

Residues 1 to 5 are Lumenal-facing; the sequence is MPHVN. The helical; Signal-anchor for type III membrane protein transmembrane segment at 6-26 threads the bilayer; the sequence is LLVVLLILPGVFSNCLFLALY. Topologically, residues 27–288 are cytoplasmic; that stretch reads DAVSFLRRAL…SFLESVKASR (262 aa). Residues 99 to 130 are disordered; it reads SCAASSSSSHETPTPRTTAEAAATVTTSTTTT. The active site involves Sec160. A non-standard amino acid (selenocysteine) is located at residue Sec160.

The protein belongs to the iodothyronine deiodinase family. Predominantly monomer. Can form homodimers but homodimerization is not essential for enzyme activity. Expressed in intestine, liver, kidney and brain of immediately premetamorphic larvae, of larvae in all stages of metamorphosis and of parasitic feeding juveniles. In immediately premetamorphic larvae, levels are significantly higher in intestine and liver than in kidney and brain.

The protein resides in the endoplasmic reticulum membrane. It catalyses the reaction 3,3',5-triiodo-L-thyronine + iodide + A + H(+) = L-thyroxine + AH2. It carries out the reaction 3,3'-diiodo-L-thyronine + iodide + A + H(+) = 3,3',5'-triiodo-L-thyronine + AH2. The enzyme catalyses 3'-iodo-L-thyronine + iodide + A + H(+) = 3',5'-diiodo-L-thyronine + AH2. The catalysed reaction is 3,3'-diiodothyronamine + iodide + A + H(+) = 3,3',5'-triiodothyronamine + AH2. It catalyses the reaction 3'-iodothyronamine + iodide + A + H(+) = 3',5'-diiodothyronamine + AH2. Its function is as follows. Plays a crucial role in the metabolism of thyroid hormones (TH) and has specific roles in TH activation and inactivation by deiodination. Catalyzes the deiodination of L-thyroxine (T4) to 3,5,3'-triiodothyronine (T3), 3,3',5'-triiodothyronine (rT3) to 3,3'-diiodothyronine (3,3'-T2) and 3',5'-diiodothyronine (3',5'-T2) to 3'-monoiodothyronine (3'-T1) via outer-ring deiodination (ORD). Catalyzes the phenolic ring deiodinations of 3,3',5'-triiodothyronamine and 3',5'- diiodothyronamine. The polypeptide is Type II iodothyronine deiodinase (Petromyzon marinus (Sea lamprey)).